Reading from the N-terminus, the 424-residue chain is Probable ribonuclease FAU-1 (424 aa).

The protein belongs to the FAU-1 family.

In terms of biological role, probable RNase involved in rRNA stability through maturation and/or degradation of precursor rRNAs. Binds to RNA in loop regions with AU-rich sequences. The sequence is that of Probable ribonuclease FAU-1 from Saccharolobus islandicus (strain M.16.27) (Sulfolobus islandicus).